The primary structure comprises 101 residues: NADH-ubiquinone oxidoreductase chain 4L (101 aa).

Helical transmembrane passes span 5-25 (LNCT…IFLN), 29-49 (ILVM…NLIF), and 64-84 (LLIL…LVIY).

It belongs to the complex I subunit 4L family.

Its subcellular location is the mitochondrion membrane. The catalysed reaction is a ubiquinone + NADH + 5 H(+)(in) = a ubiquinol + NAD(+) + 4 H(+)(out). Core subunit of the mitochondrial membrane respiratory chain NADH dehydrogenase (Complex I) that is believed to belong to the minimal assembly required for catalysis. Complex I functions in the transfer of electrons from NADH to the respiratory chain. The immediate electron acceptor for the enzyme is believed to be ubiquinone. The protein is NADH-ubiquinone oxidoreductase chain 4L (ND4L) of Chondrus crispus (Carrageen Irish moss).